A 335-amino-acid chain; its full sequence is Beta-hexosaminidase (335 aa).

Residues aspartate 60, arginine 68, arginine 133, and 163 to 164 contribute to the substrate site; that span reads KH. The active-site Proton donor/acceptor is the histidine 176. Aspartate 247 functions as the Nucleophile in the catalytic mechanism.

It belongs to the glycosyl hydrolase 3 family. NagZ subfamily.

The protein resides in the cytoplasm. It carries out the reaction Hydrolysis of terminal non-reducing N-acetyl-D-hexosamine residues in N-acetyl-beta-D-hexosaminides.. The protein operates within cell wall biogenesis; peptidoglycan recycling. Plays a role in peptidoglycan recycling by cleaving the terminal beta-1,4-linked N-acetylglucosamine (GlcNAc) from peptide-linked peptidoglycan fragments, giving rise to free GlcNAc, anhydro-N-acetylmuramic acid and anhydro-N-acetylmuramic acid-linked peptides. This Stenotrophomonas maltophilia (strain R551-3) protein is Beta-hexosaminidase.